The chain runs to 237 residues: Casparian strip membrane protein 2 (237 aa).

The interval 1 to 48 (MSGSDTSGSVHVDEHGHGHGKASSSYDGAGAPAPAPAPFQGHRKAGSG) is disordered. At 1–69 (MSGSDTSGSV…GSGGDGLRRC (69 aa)) the chain is on the cytoplasmic side. Residues 70-90 (LGLIDFVLRVAAFGPTLAAAI) traverse the membrane as a helical segment. The Extracellular portion of the chain corresponds to 91-117 (SIGTSDERLSVFTNYFQFRARFDDFPA). The helical transmembrane segment at 118-138 (FEFFIVANAIAAGYMVLSLPF) threads the bilayer. Residues 139–152 (SAATIMSSKATGVK) are Cytoplasmic-facing. A helical transmembrane segment spans residues 153 to 173 (LLLLICDTIMVGLLTAAASAA). Residues 174–205 (AAMVYVAHEGNLRANWVPICLQFHGFCQRTSG) are Extracellular-facing. A helical membrane pass occupies residues 206–226 (AVIASFLAVFVLMVLIVMAAF). Residues 227–237 (TMPRRTHHTAS) lie on the Cytoplasmic side of the membrane.

This sequence belongs to the Casparian strip membrane proteins (CASP) family. In terms of assembly, homodimer and heterodimers.

It is found in the cell membrane. Regulates membrane-cell wall junctions and localized cell wall deposition. Required for establishment of the Casparian strip membrane domain (CSD) and the subsequent formation of Casparian strips, a cell wall modification of the root endodermis that determines an apoplastic barrier between the intraorganismal apoplasm and the extraorganismal apoplasm and prevents lateral diffusion. The polypeptide is Casparian strip membrane protein 2 (Oryza sativa subsp. japonica (Rice)).